The primary structure comprises 188 residues: Ribosome-recycling factor (188 aa).

The protein belongs to the RRF family.

The protein localises to the cytoplasm. In terms of biological role, responsible for the release of ribosomes from messenger RNA at the termination of protein biosynthesis. May increase the efficiency of translation by recycling ribosomes from one round of translation to another. The polypeptide is Ribosome-recycling factor (Phenylobacterium zucineum (strain HLK1)).